The chain runs to 146 residues: uncharacterized protein (146 aa).

A helical membrane pass occupies residues 7 to 27 (FVLSITIVLVILIIIAFIWYN).

The protein belongs to the asfivirus E146L family.

The protein localises to the host membrane. The protein resides in the virion. This is an uncharacterized protein from Ornithodoros (relapsing fever ticks).